Reading from the N-terminus, the 483-residue chain is Cysteine--tRNA ligase (483 aa).

Residue cysteine 29 participates in Zn(2+) binding. The 'HIGH' region signature appears at 31 to 41 (ITVYDYCHLGH). The Zn(2+) site is built by cysteine 215, histidine 240, and glutamate 244. The 'KMSKS' region signature appears at 272 to 276 (KMSKS). Lysine 275 is a binding site for ATP.

The protein belongs to the class-I aminoacyl-tRNA synthetase family. In terms of assembly, monomer. The cofactor is Zn(2+).

The protein localises to the cytoplasm. The catalysed reaction is tRNA(Cys) + L-cysteine + ATP = L-cysteinyl-tRNA(Cys) + AMP + diphosphate. The protein is Cysteine--tRNA ligase (cysS) of Synechocystis sp. (strain ATCC 27184 / PCC 6803 / Kazusa).